The primary structure comprises 226 residues: Cytidylate kinase (226 aa).

12–20 (GPSGAGKGT) is an ATP binding site.

It belongs to the cytidylate kinase family. Type 1 subfamily.

The protein resides in the cytoplasm. The enzyme catalyses CMP + ATP = CDP + ADP. It carries out the reaction dCMP + ATP = dCDP + ADP. This is Cytidylate kinase from Vibrio vulnificus (strain YJ016).